Reading from the N-terminus, the 998-residue chain is Bifunctional glutamine synthetase adenylyltransferase/adenylyl-removing enzyme (998 aa).

Positions 1–487 are adenylyl removase; the sequence is MVVTKPATQR…LHAKLFYQPL (487 aa). The adenylyl transferase stretch occupies residues 492–998; the sequence is GPAGLEIRHG…KAVVCKVFGS (507 aa).

This sequence belongs to the GlnE family. Requires Mg(2+) as cofactor.

The enzyme catalyses [glutamine synthetase]-O(4)-(5'-adenylyl)-L-tyrosine + phosphate = [glutamine synthetase]-L-tyrosine + ADP. The catalysed reaction is [glutamine synthetase]-L-tyrosine + ATP = [glutamine synthetase]-O(4)-(5'-adenylyl)-L-tyrosine + diphosphate. Its function is as follows. Involved in the regulation of glutamine synthetase GlnA, a key enzyme in the process to assimilate ammonia. When cellular nitrogen levels are high, the C-terminal adenylyl transferase (AT) inactivates GlnA by covalent transfer of an adenylyl group from ATP to specific tyrosine residue of GlnA, thus reducing its activity. Conversely, when nitrogen levels are low, the N-terminal adenylyl removase (AR) activates GlnA by removing the adenylyl group by phosphorolysis, increasing its activity. The regulatory region of GlnE binds the signal transduction protein PII (GlnB) which indicates the nitrogen status of the cell. This Mycolicibacterium paratuberculosis (strain ATCC BAA-968 / K-10) (Mycobacterium paratuberculosis) protein is Bifunctional glutamine synthetase adenylyltransferase/adenylyl-removing enzyme.